The following is a 678-amino-acid chain: Protein CASP (678 aa).

Over 1–619 the chain is Cytoplasmic; that stretch reads MAANVGSMSQ…LILSNKTART (619 aa). 4 coiled-coil regions span residues 16-40, 67-374, 427-454, and 502-556; these read DLQQLQRELDAAATVLANRQDESEQ, LLKS…TLKS, HLTEATAKAVEQKELIARLEQDLSTIQS, and LSII…FLQS. At Ser586 the chain carries Phosphoserine. Residues 620 to 640 traverse the membrane as a helical; Anchor for type IV membrane protein segment; that stretch reads IGFFYTLFLHCLVFLVLYKLA. Residues 641-678 are Lumenal-facing; that stretch reads WSESVERDCAATCAKKFADHLHKFHESDNGAAAGDLWQ.

Belongs to the CASP family. Homodimer; disulfide-linked. Interacts with GOLGA5. In terms of tissue distribution, ubiquitously expressed.

Its subcellular location is the golgi apparatus membrane. In terms of biological role, may be involved in intra-Golgi retrograde transport. The chain is Protein CASP (Cux1) from Mus musculus (Mouse).